Reading from the N-terminus, the 489-residue chain is Cytochrome P450 2C70 (489 aa).

Residues 1 to 27 form the signal peptide; that stretch reads MALFIFLGIWLSCLVFLFLWNQHHVRR. Residue C434 coordinates heme.

It belongs to the cytochrome P450 family. The cofactor is heme.

It localises to the endoplasmic reticulum membrane. It is found in the microsome membrane. The enzyme catalyses chenodeoxycholate + reduced [NADPH--hemoprotein reductase] + O2 = alpha-muricholate + oxidized [NADPH--hemoprotein reductase] + H2O + H(+). It carries out the reaction ursodeoxycholate + reduced [NADPH--hemoprotein reductase] + O2 = beta-muricholate + oxidized [NADPH--hemoprotein reductase] + H2O + H(+). A cytochrome P450 monooxygenase involved in muricholic acid (MCA) synthesis. Hydroxylates at the 6-beta position two major bile acids, chenodeoxycholic acid (CDCA) and ursodeoxycholic acid (UDCA) to form alpha-MCA and beta-MCA, respectively. May regulate NR1H4/farnesoid X receptor signaling, as taurine-conjugated MCAs are antagonists of NR1H4. Mechanistically, uses molecular oxygen inserting one oxygen atom into a substrate, and reducing the second into a water molecule, with two electrons provided by NADPH via cytochrome P450 reductase (CPR; NADPH-ferrihemoprotein reductase). The chain is Cytochrome P450 2C70 from Rattus norvegicus (Rat).